Here is a 185-residue protein sequence, read N- to C-terminus: Homeobox expressed in ES cells 1 (185 aa).

Residues 32 to 69 form a disordered region; it reads KKDCTTSVRPHRPWTDTCGDSEKGGNPPLHAPDLPSET. The segment at residues 108–167 is a DNA-binding region (homeobox); sequence GRRPRTAFTQNQVEVLENVFRVNCYPGIDIREDLAQKLNLEEDRIQIWFQNRRAKMKRSR.

The protein belongs to the ANF homeobox family. As to quaternary structure, can form heterodimers with PROP1 in binding to DNA Interacts with TLE1. High levels found in the embryonic liver, lower level expression seen in the viscera, amnion and yolk sac.

It is found in the nucleus. Required for the normal development of the forebrain, eyes and other anterior structures such as the olfactory placodes and pituitary gland. Possible transcriptional repressor. Binds to the palindromic PIII sequence, 5'-AGCTTGAGTCTAATTGAATTAACTGTAC-3'. HESX1 and PROP1 bind as heterodimers on this palindromic site, and, in vitro, HESX1 can antagonize PROP1 activation. In Mus musculus (Mouse), this protein is Homeobox expressed in ES cells 1 (Hesx1).